The sequence spans 58 residues: Small ribosomal subunit protein bS21 (58 aa).

Over residues 32 to 42 (IRKREHYEKPS) the composition is skewed to basic and acidic residues. Positions 32–58 (IRKREHYEKPSVKRKKKSEAARKRKFK) are disordered. Residues 43-58 (VKRKKKSEAARKRKFK) show a composition bias toward basic residues.

It belongs to the bacterial ribosomal protein bS21 family.

The chain is Small ribosomal subunit protein bS21 from Lachnoclostridium phytofermentans (strain ATCC 700394 / DSM 18823 / ISDg) (Clostridium phytofermentans).